The chain runs to 304 residues: Methionyl-tRNA formyltransferase (304 aa).

Residue 111 to 114 (SLLP) participates in (6S)-5,6,7,8-tetrahydrofolate binding.

The protein belongs to the Fmt family.

It catalyses the reaction L-methionyl-tRNA(fMet) + (6R)-10-formyltetrahydrofolate = N-formyl-L-methionyl-tRNA(fMet) + (6S)-5,6,7,8-tetrahydrofolate + H(+). Its function is as follows. Attaches a formyl group to the free amino group of methionyl-tRNA(fMet). The formyl group appears to play a dual role in the initiator identity of N-formylmethionyl-tRNA by promoting its recognition by IF2 and preventing the misappropriation of this tRNA by the elongation apparatus. The chain is Methionyl-tRNA formyltransferase from Campylobacter fetus subsp. fetus (strain 82-40).